A 209-amino-acid chain; its full sequence is uncharacterized protein (209 aa).

This is an uncharacterized protein from Orgyia pseudotsugata (Douglas-fir tussock moth).